The primary structure comprises 111 residues: UPF0060 membrane protein HCH_03337 (111 aa).

The next 4 helical transmembrane spans lie at 8-28, 33-53, 65-85, and 88-108; these read LLFA…WLVI, SLWL…LLTL, YGGM…GVGL, and FDFL…LQPI.

Belongs to the UPF0060 family.

It localises to the cell inner membrane. In Hahella chejuensis (strain KCTC 2396), this protein is UPF0060 membrane protein HCH_03337.